A 92-amino-acid chain; its full sequence is Precursor of elicitor peptide 1 (92 aa).

A propeptide spanning residues methionine 1–arginine 69 is cleaved from the precursor. Residues histidine 35 to asparagine 92 are disordered. Over residues aspartate 37–lysine 48 the composition is skewed to polar residues. A compositionally biased stretch (basic and acidic residues) spans glutamine 49–valine 64.

This sequence belongs to the brassicaceae elicitor peptide family. In terms of assembly, interacts with its receptor PEPR1.

In terms of biological role, elicitor of plant defense. Induces the production of plant defensin (PDF1.2) and of H(2)O(2). Promotes resistance to the root fungal pathogen P.irregulare. Triggers the expression of several PROSCOOP genes (e.g. PROSCOOP2, PROSCOOP7, PROSCOOP8, PROSCOOP12 and PROSCOOP13). In Arabidopsis thaliana (Mouse-ear cress), this protein is Precursor of elicitor peptide 1.